The following is a 465-amino-acid chain: Protein maelstrom (465 aa).

The segment at residues 2–69 (APKKHSGFMM…ADRGKRERLN (68 aa)) is a DNA-binding region (HMG box). The interval 415–440 (MRKSSKHTGPSVSTQRERNAGAWNLP) is disordered.

The protein belongs to the maelstrom family.

The protein resides in the cytoplasm. It localises to the nucleus. In terms of biological role, involved both in the piRNA and miRNA metabolic processes. As a component of the meiotic nuage, plays a central role during oogenesis by repressing transposable elements and preventing their mobilization, which is essential for the germline integrity. Repression of transposable elements is mediated via the piRNA metabolic process, which mediates the repression of transposable elements during meiosis by forming complexes composed of piRNAs and Piwi proteins and governs the repression of transposons. As a nuclear component, it is required for proper differentiation in the germline stem cell (GSC) lineage by repressing microRNA-7 (miR-7), thereby acting as an indirect regulator of bag-of-marbles (Bam). Acts by binding to the promoter of miR-7 gene and repressing its expression; miR-7 repression alleviates the Bam repression by miR-7, thereby allowing differentiation in the germline stem cell (GSC) lineage. The protein is Protein maelstrom (mael) of Drosophila yakuba (Fruit fly).